We begin with the raw amino-acid sequence, 621 residues long: Membrane protein insertase YidC (621 aa).

Helical transmembrane passes span 1 to 21 (MDKN…GFSI), 363 to 383 (GWGL…KVLV), 436 to 456 (MGGC…FFFV), 486 to 506 (IPLL…TNIL), 527 to 547 (LMMY…SSGL), and 549 to 569 (YYYF…RKTT).

The protein belongs to the OXA1/ALB3/YidC family. Type 1 subfamily. In terms of assembly, interacts with the Sec translocase complex via SecD. Specifically interacts with transmembrane segments of nascent integral membrane proteins during membrane integration.

Its subcellular location is the cell inner membrane. Required for the insertion and/or proper folding and/or complex formation of integral membrane proteins into the membrane. Involved in integration of membrane proteins that insert both dependently and independently of the Sec translocase complex, as well as at least some lipoproteins. Aids folding of multispanning membrane proteins. The protein is Membrane protein insertase YidC of Phocaeicola vulgatus (strain ATCC 8482 / DSM 1447 / JCM 5826 / CCUG 4940 / NBRC 14291 / NCTC 11154) (Bacteroides vulgatus).